The primary structure comprises 171 residues: Small ribosomal subunit protein uS4 (171 aa).

Residues arginine 104–alanine 168 form the S4 RNA-binding domain.

It belongs to the universal ribosomal protein uS4 family. As to quaternary structure, part of the 30S ribosomal subunit. Contacts protein S5. The interaction surface between S4 and S5 is involved in control of translational fidelity.

In terms of biological role, one of the primary rRNA binding proteins, it binds directly to 16S rRNA where it nucleates assembly of the body of the 30S subunit. Its function is as follows. With S5 and S12 plays an important role in translational accuracy. In Aeropyrum pernix (strain ATCC 700893 / DSM 11879 / JCM 9820 / NBRC 100138 / K1), this protein is Small ribosomal subunit protein uS4.